Reading from the N-terminus, the 609-residue chain is Kelch-like protein 20 (609 aa).

A BTB domain is found at 68-135; that stretch reads CDVVLVVGAK…AYTSQITVEE (68 aa). One can recognise a BACK domain in the interval 170–272; the sequence is CLGIRAFADT…SPKFLVGTVG (103 aa). 6 Kelch repeats span residues 319–365, 367–413, 414–460, 462–507, 509–554, and 556–601; these read VLFA…VLDD, LYAV…VLGG, FLYA…VLGG, LYAV…VYQD, IYAV…VVNG, and LMAV…VIKM.

As to quaternary structure, component of the BCR(KLHL20) E3 ubiquitin ligase complex, at least composed of CUL3, KLHL20 and RBX1. Interacts with PDZ-RhoGEF/ARHGEF11, DAPK1, PML and CORO7. Interacts with F-actin. Interacts with IFN-gamma (IFNG). Interacts (via kelch repeats) with IVNS1ABP (via kelch repeats); this interaction blocks the assembly of CUL3-KLHL20 complex.

It localises to the cytoplasm. Its subcellular location is the perinuclear region. It is found in the nucleus. The protein resides in the golgi apparatus. The protein localises to the trans-Golgi network. It localises to the cell projection. Its subcellular location is the axon. It is found in the dendrite. It participates in protein modification; protein ubiquitination. Functionally, substrate-specific adapter of a BCR (BTB-CUL3-RBX1) E3 ubiquitin-protein ligase complex involved in interferon response and anterograde Golgi to endosome transport. The BCR(KLHL20) E3 ubiquitin ligase complex mediates the ubiquitination of DAPK1, leading to its degradation by the proteasome, thereby acting as a negative regulator of apoptosis. The BCR(KLHL20) E3 ubiquitin ligase complex also specifically mediates 'Lys-33'-linked ubiquitination. Involved in anterograde Golgi to endosome transport by mediating 'Lys-33'-linked ubiquitination of CORO7, promoting interaction between CORO7 and EPS15, thereby facilitating actin polymerization and post-Golgi trafficking. Also acts as a regulator of endothelial migration during angiogenesis by controlling the activation of Rho GTPases. The BCR(KLHL20) E3 ubiquitin ligase complex acts as a regulator of neurite outgrowth by mediating ubiquitination and degradation of PDZ-RhoGEF/ARHGEF11. This chain is Kelch-like protein 20 (KLHL20), found in Pongo abelii (Sumatran orangutan).